Here is a 178-residue protein sequence, read N- to C-terminus: Interleukin-10 (178 aa).

The first 18 residues, 1 to 18 (MHSSALLCCLVFLTGVRA), serve as a signal peptide directing secretion. 2 cysteine pairs are disulfide-bonded: cysteine 30-cysteine 126 and cysteine 80-cysteine 132. N-linked (GlcNAc...) asparagine glycosylation occurs at asparagine 134.

The protein belongs to the IL-10 family. In terms of assembly, homodimer. Interacts with IL10RA and IL10RB.

The protein resides in the secreted. Its function is as follows. Major immune regulatory cytokine that acts on many cells of the immune system where it has profound anti-inflammatory functions, limiting excessive tissue disruption caused by inflammation. Mechanistically, IL10 binds to its heterotetrameric receptor comprising IL10RA and IL10RB leading to JAK1 and STAT2-mediated phosphorylation of STAT3. In turn, STAT3 translocates to the nucleus where it drives expression of anti-inflammatory mediators. Targets antigen-presenting cells (APCs) such as macrophages and monocytes and inhibits their release of pro-inflammatory cytokines including granulocyte-macrophage colony-stimulating factor /GM-CSF, granulocyte colony-stimulating factor/G-CSF, IL-1 alpha, IL-1 beta, IL-6, IL-8 and TNF-alpha. Also interferes with antigen presentation by reducing the expression of MHC-class II and co-stimulatory molecules, thereby inhibiting their ability to induce T cell activation. In addition, controls the inflammatory response of macrophages by reprogramming essential metabolic pathways including mTOR signaling. The polypeptide is Interleukin-10 (IL10) (Saimiri sciureus (Common squirrel monkey)).